The following is a 444-amino-acid chain: MAFRCQRDSYAREFTTTVVSCRPAELHTEESNGKKEVLSGFQVVLEDTLLFPEGGGQPDDRGTINDISVLRVTRRGTQADHFTQTPLTPGTEVQVRVDWERRFDHMQQHSGQHLITAVADDLFGLKTTSWELGRLRSVIELDSPTVTAEQVAAIERSVNEKIRDRLPVNVRELSLDDPEVEQVRGRGLPDDHAGPIRVVTIESVDSNMCCGTHVSNLSDLQVIKILGTEKGKKNKTNLIFLAGNRVLKWMERSHGIEKALTALLKCGAEDHVEAVKKLQNSSKLLQKNNLNLLRDLAVHIAHSLRNSPDWGGVITLHRKGGGEASWRSWAACNFPAPFAAWSQVCALCFRKDGDSEFMNIIANEIGSEETLLFLTVGDEKGAGLFLLAGPAEAVETLGPRVSEVLEGKGAGKKGRFQGKATKMSRRAEVQALLQDYISTQSAEE.

Residues His109 and His113 each contribute to the Zn(2+) site. The residue at position 174 (Ser174) is a Phosphoserine. Residues Cys209 and His213 each contribute to the Zn(2+) site.

The protein belongs to the class-II aminoacyl-tRNA synthetase family. Alax-L subfamily. It depends on Zn(2+) as a cofactor.

It localises to the cytoplasm. Functionally, functions in trans to edit the amino acid moiety from incorrectly charged tRNA(Ala). This Bos taurus (Bovine) protein is Alanyl-tRNA editing protein Aarsd1 (AARSD1).